Reading from the N-terminus, the 147-residue chain is uncharacterized protein (147 aa).

The chain crosses the membrane as a helical span at residues 13–35; it reads NSRINLLGILVLNVVCGKSSIFF.

The protein localises to the membrane. This is an uncharacterized protein from Saccharomyces cerevisiae (strain ATCC 204508 / S288c) (Baker's yeast).